The chain runs to 257 residues: Probable pectate lyase E (257 aa).

The signal sequence occupies residues 1–17 (MYQKLLLVPLLLTSALA).

Belongs to the polysaccharide lyase 3 family. It depends on Ca(2+) as a cofactor.

It localises to the secreted. It carries out the reaction Eliminative cleavage of (1-&gt;4)-alpha-D-galacturonan to give oligosaccharides with 4-deoxy-alpha-D-galact-4-enuronosyl groups at their non-reducing ends.. Functionally, pectinolytic enzyme consist of four classes of enzymes: pectin lyase, polygalacturonase, pectin methylesterase and rhamnogalacturonase. Among pectinolytic enzymes, pectin lyase is the most important in depolymerization of pectin, since it cleaves internal glycosidic bonds of highly methylated pectins. Favors pectate, the anion, over pectin, the methyl ester. The sequence is that of Probable pectate lyase E (plyE) from Aspergillus flavus (strain ATCC 200026 / FGSC A1120 / IAM 13836 / NRRL 3357 / JCM 12722 / SRRC 167).